Reading from the N-terminus, the 336-residue chain is Protein YIPF3 (336 aa).

Residues 1 to 73 (MSAPGGGRSG…AGAGGEEDGE (73 aa)) form a disordered region. At 1–143 (MSAPGGGRSG…PVKMINFPQK (143 aa)) the chain is on the cytoplasmic side. Acidic residues predominate over residues 55-73 (EEEEEAEGEAGAGGEEDGE). A helical membrane pass occupies residues 144 to 164 (IAGELYGPLMLVFTLVAILLH). Residues 165 to 182 (GMKTSDTIIREGTLMGTA) lie on the Lumenal side of the membrane. Residues 183-203 (IGTCFGYWLGVSSFIYFLAYL) traverse the membrane as a helical segment. The Cytoplasmic segment spans residues 204–209 (CNAQIT). The chain crosses the membrane as a helical span at residues 210 to 230 (MVQMLSLLGYGLFGHCITLLV). Topologically, residues 231–239 (TYNIHFHSL) are lumenal. Residues 240–260 (FYIFWLVVGGLSTLRMVAVLV) form a helical membrane-spanning segment. The Cytoplasmic segment spans residues 261–269 (SRTVGHTQR). A helical transmembrane segment spans residues 270–290 (LILCGTLAALHMLFLLYLHFA). The Lumenal segment spans residues 291–336 (YHKVVEGILDTLEGPNMPPFQRVARDIPVVSNAVLNTTAKANAMTL). Asparagine 326 carries N-linked (GlcNAc...) asparagine glycosylation.

The protein belongs to the YIP1 family.

Its subcellular location is the cell membrane. It localises to the golgi apparatus. It is found in the cis-Golgi network membrane. The protein resides in the cytoplasm. In terms of biological role, involved in the maintenance of the Golgi structure. May play a role in hematopoiesis. This is Protein YIPF3 (YIPF3) from Gallus gallus (Chicken).